Consider the following 651-residue polypeptide: Protein SCARECROW 1 (651 aa).

Disordered regions lie at residues Met1 to Leu33 and Ser188 to Asp277. Pro residues predominate over residues Pro190–Gln228. The stretch at Thr253–Gly280 forms a coiled coil. Residues Ala254–Ala263 show a composition bias toward low complexity. Residues Ala264 to Asp277 are compositionally biased toward basic and acidic residues. One can recognise a GRAS domain in the interval Lys274–Arg644. The tract at residues Leu281–Pro345 is leucine repeat I (LRI). A LxCxE motif motif is present at residues Leu288 to Glu292. The segment at Phe364–Gly429 is VHIID. The VHIID signature appears at Val395–Asp399. The leucine repeat II (LRII) stretch occupies residues Ala439–Lys471. The segment at Val480–Asn567 is PFYRE. The tract at residues Ala570–Arg644 is SAW.

The protein belongs to the GRAS family. Interacts with SHR1, but not with SHR2. As to expression, expressed in the initial daughter cell before its asymmetric division and remains expressed in the endodermal cell layer after the division.

Its subcellular location is the nucleus. In terms of biological role, transcription factor required for quiescent center cells specification and maintenance of surrounding stem cells, and for the asymmetric cell division involved in radial pattern formation in roots. Essential for cell division but not differentiation of the ground tissue. Regulates the radial organization of the shoot axial organs. Restricts SHR movment and sequesters it into the nucleus of the endodermis. This Oryza sativa subsp. japonica (Rice) protein is Protein SCARECROW 1 (SCR1).